Here is a 418-residue protein sequence, read N- to C-terminus: Serine--tRNA ligase (418 aa).

L-serine is bound at residue 227 to 229 (TSE). ATP is bound by residues 258 to 260 (RRE) and Val-274. Glu-281 lines the L-serine pocket. Residue 345-348 (ELTS) participates in ATP binding. An L-serine-binding site is contributed by Thr-380.

This sequence belongs to the class-II aminoacyl-tRNA synthetase family. Type-1 seryl-tRNA synthetase subfamily. Homodimer. The tRNA molecule binds across the dimer.

The protein resides in the cytoplasm. It carries out the reaction tRNA(Ser) + L-serine + ATP = L-seryl-tRNA(Ser) + AMP + diphosphate + H(+). The enzyme catalyses tRNA(Sec) + L-serine + ATP = L-seryl-tRNA(Sec) + AMP + diphosphate + H(+). Its pathway is aminoacyl-tRNA biosynthesis; selenocysteinyl-tRNA(Sec) biosynthesis; L-seryl-tRNA(Sec) from L-serine and tRNA(Sec): step 1/1. In terms of biological role, catalyzes the attachment of serine to tRNA(Ser). Is also able to aminoacylate tRNA(Sec) with serine, to form the misacylated tRNA L-seryl-tRNA(Sec), which will be further converted into selenocysteinyl-tRNA(Sec). The chain is Serine--tRNA ligase from Rhodococcus opacus (strain B4).